Consider the following 754-residue polypeptide: MTSNNSLLGRGRMSYSSTAPPRFKRSVDQRDTFSDNFDYDKDSSNRGRTYIAASNSTTGVPPPNNSRSGCTNNTNNTNNTSNTSNTNNNDSVDENTVFETLPYYLPCFSWLPEYTFNKLWGDVIAGISVASFQIPLALSYTTSIAHVPPLCGLYSLAISPFVYGILGSVPQMIVGPESAISLVVGQAVESITLHKENVSLIDISTVITFVSGTILLFSGISRFGFLGNVLSKALLRGFISSVGLVMIINSLISELKLDKFLVSLPQHYHTPFEKILFLIDYAPAQYHIPTAIFSGCCLIVLFLTRLLKRKLMKYHKSAIFFPDILLVVIVTILISMKFNLKHRYGISIIGDFSMDNFDELKNPLTRPRRKLIPDLFSASLIVAMLGFFESTTASKSLGTTYNLTVSSNRELVALGFMNIVISLFGALPAFGGYGRSKINALSGAQSVMSGVFMGVITLITMNLLLQFVHYIPNCVLSVITTIIGISLLEEVPGDIKFHLRCGGFSELFVFAVTFCTTIFYSIEAGICIGCVYSIINIIKHSAKSRIQILARVAGTSNFTNLDDYMMNMKRNSLDVEGTEEIEGCMIVRIPEPLTFTNSEDLKQRLDRIERYGSSKIHPGRKSLRSKDSIKYVIFDLGGMTSIDSSAAQVLEEIITSYKRRNVFIYLVNVSINDKVRRRLFKAGVAASVERAQANNNENNTSNTFSDAGETYSPYFDSIDAALYEIEKMKIKGNNVPNNDSESFMSNTLFNSSLV.

The tract at residues 1-91 is disordered; sequence MTSNNSLLGR…NTSNTNNNDS (91 aa). At 1 to 118 the chain is on the cytoplasmic side; that stretch reads MTSNNSLLGR…SWLPEYTFNK (118 aa). Positions 25–45 are enriched in basic and acidic residues; the sequence is RSVDQRDTFSDNFDYDKDSSN. Low complexity predominate over residues 65 to 89; it reads NSRSGCTNNTNNTNNTSNTSNTNNN. Residues 119 to 139 traverse the membrane as a helical segment; sequence LWGDVIAGISVASFQIPLALS. The Lumenal portion of the chain corresponds to 140–146; it reads YTTSIAH. A helical membrane pass occupies residues 147–167; it reads VPPLCGLYSLAISPFVYGILG. Topologically, residues 168–172 are cytoplasmic; sequence SVPQM. A helical transmembrane segment spans residues 173 to 193; that stretch reads IVGPESAISLVVGQAVESITL. Residues 194-199 lie on the Lumenal side of the membrane; it reads HKENVS. A helical membrane pass occupies residues 200-220; that stretch reads LIDISTVITFVSGTILLFSGI. The Cytoplasmic segment spans residues 221–232; the sequence is SRFGFLGNVLSK. Residues 233-253 traverse the membrane as a helical segment; sequence ALLRGFISSVGLVMIINSLIS. Topologically, residues 254-282 are lumenal; the sequence is ELKLDKFLVSLPQHYHTPFEKILFLIDYA. A helical transmembrane segment spans residues 283 to 303; it reads PAQYHIPTAIFSGCCLIVLFL. At 304-317 the chain is on the cytoplasmic side; that stretch reads TRLLKRKLMKYHKS. A helical membrane pass occupies residues 318–338; the sequence is AIFFPDILLVVIVTILISMKF. The Lumenal segment spans residues 339–370; sequence NLKHRYGISIIGDFSMDNFDELKNPLTRPRRK. The chain crosses the membrane as a helical span at residues 371–391; that stretch reads LIPDLFSASLIVAMLGFFEST. The Cytoplasmic portion of the chain corresponds to 392 to 410; that stretch reads TASKSLGTTYNLTVSSNRE. A helical transmembrane segment spans residues 411–431; the sequence is LVALGFMNIVISLFGALPAFG. Topologically, residues 432-450 are lumenal; the sequence is GYGRSKINALSGAQSVMSG. Residues 451-471 form a helical membrane-spanning segment; that stretch reads VFMGVITLITMNLLLQFVHYI. Residues 472 to 474 are Cytoplasmic-facing; sequence PNC. Residues 475–495 traverse the membrane as a helical segment; it reads VLSVITTIIGISLLEEVPGDI. At 496-517 the chain is on the lumenal side; the sequence is KFHLRCGGFSELFVFAVTFCTT. The chain crosses the membrane as a helical span at residues 518–538; it reads IFYSIEAGICIGCVYSIINII. Over 539–754 the chain is Cytoplasmic; the sequence is KHSAKSRIQI…SNTLFNSSLV (216 aa). An STAS domain is found at 574–725; that stretch reads DVEGTEEIEG…DSIDAALYEI (152 aa).

Belongs to the SLC26A/SulP transporter (TC 2.A.53) family.

Its subcellular location is the endoplasmic reticulum membrane. Functionally, possible sulfate transporter. The sequence is that of Putative sulfate transporter YPR003C from Saccharomyces cerevisiae (strain ATCC 204508 / S288c) (Baker's yeast).